The chain runs to 287 residues: U1 small nuclear ribonucleoprotein A (287 aa).

Residues 16-95 (HTIYINNLNE…KPMRIQYAKT (80 aa)) form the RRM 1 domain. Lys66 is subject to N6-acetyllysine. The interval 106-134 (TYVERDRKREKRKPKSQETPAAKKAVQGG) is disordered. The segment covering 125–134 (PAAKKAVQGG) has biased composition (low complexity). Arg157 carries the post-translational modification Omega-N-methylarginine. The RRM 2 domain maps to 213 to 287 (HILFLTNLPE…NAMKISFAKK (75 aa)).

The protein belongs to the RRM U1 A/B'' family. U1 snRNP is composed of the 7 core Sm proteins SNRPB, SNRPD1, SNRPD2, SNRPD3, SNRPE, SNRPF and SNRPG that assemble in a heptameric protein ring on the Sm site of the small nuclear RNA to form the core snRNP, and at least three U1 snRNP-specific proteins SNRNP70/U1-70K, SNRPA/U1-A and SNRPC/U1-C. Interacts with SFPQ; component of a snRNP-free complex with SFPQ. Interacts with IVNS1ABP (via BACK domain); the interaction is indirect.

It localises to the nucleus. Component of the spliceosomal U1 snRNP, which is essential for recognition of the pre-mRNA 5' splice-site and the subsequent assembly of the spliceosome. U1 snRNP is the first snRNP to interact with pre-mRNA. This interaction is required for the subsequent binding of U2 snRNP and the U4/U6/U5 tri-snRNP. SNRPA binds stem loop II of U1 snRNA. In a snRNP-free form (SF-A) may be involved in coupled pre-mRNA splicing and polyadenylation process. May bind preferentially to the 5'-UGCAC-3' motif on RNAs. In Mus musculus (Mouse), this protein is U1 small nuclear ribonucleoprotein A (Snrpa).